The chain runs to 159 residues: MPLPRQPLSLKARALGYLSRREHSRVELRRKLVPHAESAEEVDALLDWLEGENWLSNTRFAESMVHRRAGRYGTARLMQELKTHQLGEETLGEVKAQLQSTEAVRAKALWEKRFGRPPADLAERAKQVRYMMARGFSRSVVSRIIAGADELLEDGDMSD.

The protein belongs to the RecX family.

The protein resides in the cytoplasm. In terms of biological role, modulates RecA activity. This chain is Regulatory protein RecX, found in Ralstonia pickettii (strain 12J).